The sequence spans 379 residues: Queuine tRNA-ribosyltransferase (379 aa).

Residue Asp-94 is the Proton acceptor of the active site. Substrate is bound by residues 94 to 98 (DSGGF), Asp-148, Gln-191, and Gly-218. The interval 249–255 (GVGSPDS) is RNA binding. Asp-268 (nucleophile) is an active-site residue. The segment at 273–277 (TRIAR) is RNA binding; important for wobble base 34 recognition. Cys-306, Cys-308, Cys-311, and His-337 together coordinate Zn(2+).

It belongs to the queuine tRNA-ribosyltransferase family. As to quaternary structure, homodimer. Within each dimer, one monomer is responsible for RNA recognition and catalysis, while the other monomer binds to the replacement base PreQ1. Requires Zn(2+) as cofactor.

It catalyses the reaction 7-aminomethyl-7-carbaguanine + guanosine(34) in tRNA = 7-aminomethyl-7-carbaguanosine(34) in tRNA + guanine. Its pathway is tRNA modification; tRNA-queuosine biosynthesis. In terms of biological role, catalyzes the base-exchange of a guanine (G) residue with the queuine precursor 7-aminomethyl-7-deazaguanine (PreQ1) at position 34 (anticodon wobble position) in tRNAs with GU(N) anticodons (tRNA-Asp, -Asn, -His and -Tyr). Catalysis occurs through a double-displacement mechanism. The nucleophile active site attacks the C1' of nucleotide 34 to detach the guanine base from the RNA, forming a covalent enzyme-RNA intermediate. The proton acceptor active site deprotonates the incoming PreQ1, allowing a nucleophilic attack on the C1' of the ribose to form the product. After dissociation, two additional enzymatic reactions on the tRNA convert PreQ1 to queuine (Q), resulting in the hypermodified nucleoside queuosine (7-(((4,5-cis-dihydroxy-2-cyclopenten-1-yl)amino)methyl)-7-deazaguanosine). The polypeptide is Queuine tRNA-ribosyltransferase (Bacillus cytotoxicus (strain DSM 22905 / CIP 110041 / 391-98 / NVH 391-98)).